The following is an 828-amino-acid chain: Putative dual specificity tyrosine-phosphorylation-regulated kinase 3 homolog (828 aa).

Basic and acidic residues predominate over residues Met1 to Leu14. The disordered stretch occupies residues Met1 to Asn26. Positions Thr17–Asn26 are enriched in polar residues. The region spanning Tyr276 to Leu589 is the Protein kinase domain. ATP is bound by residues Ile282–Val290 and Lys305. The Proton acceptor role is filled by Asp402. Ser616 is subject to Phosphoserine.

Belongs to the protein kinase superfamily. CMGC Ser/Thr protein kinase family. MNB/DYRK subfamily. Autophosphorylated on tyrosine residues.

It carries out the reaction L-seryl-[protein] + ATP = O-phospho-L-seryl-[protein] + ADP + H(+). The enzyme catalyses L-threonyl-[protein] + ATP = O-phospho-L-threonyl-[protein] + ADP + H(+). It catalyses the reaction L-tyrosyl-[protein] + ATP = O-phospho-L-tyrosyl-[protein] + ADP + H(+). The protein is Putative dual specificity tyrosine-phosphorylation-regulated kinase 3 homolog (Dyrk3) of Drosophila melanogaster (Fruit fly).